The sequence spans 158 residues: Large ribosomal subunit protein eL20z (158 aa).

This sequence belongs to the eukaryotic ribosomal protein eL20 family.

This is Large ribosomal subunit protein eL20z (RPL18A1) from Arabidopsis thaliana (Mouse-ear cress).